We begin with the raw amino-acid sequence, 424 residues long: Probable methyltransferase EP424R (424 aa).

Positions 103-315 (QIVTNAWLKM…TYIVGKNRLR (213 aa)) constitute an Adrift-type SAM-dependent 2'-O-MTase domain. S-adenosyl-L-methionine is bound by residues Gly135 and Asp228. Lys268 serves as the catalytic Proton acceptor.

Its subcellular location is the virion. In Ornithodoros (relapsing fever ticks), this protein is Probable methyltransferase EP424R.